We begin with the raw amino-acid sequence, 430 residues long: Adenylosuccinate synthetase (430 aa).

GTP-binding positions include 12–18 (GDEGKGK) and 40–42 (GHT). The Proton acceptor role is filled by Asp-13. Mg(2+) contacts are provided by Asp-13 and Gly-40. Residues 13–16 (DEGK), 38–41 (NAGH), Thr-128, Arg-142, Gln-223, Thr-238, and Arg-302 contribute to the IMP site. Catalysis depends on His-41, which acts as the Proton donor. 298 to 304 (TTTGRPR) is a binding site for substrate. GTP is bound by residues Arg-304, 330–332 (LLD), and 412–414 (SVG).

This sequence belongs to the adenylosuccinate synthetase family. Homodimer. Requires Mg(2+) as cofactor.

The protein localises to the cytoplasm. The enzyme catalyses IMP + L-aspartate + GTP = N(6)-(1,2-dicarboxyethyl)-AMP + GDP + phosphate + 2 H(+). The protein operates within purine metabolism; AMP biosynthesis via de novo pathway; AMP from IMP: step 1/2. Functionally, plays an important role in the de novo pathway of purine nucleotide biosynthesis. Catalyzes the first committed step in the biosynthesis of AMP from IMP. In Listeria monocytogenes serotype 4b (strain CLIP80459), this protein is Adenylosuccinate synthetase.